The primary structure comprises 360 residues: MTPTLRRKLEALAERREELERLLAEPDVVADNTRFRDLSREFAQLEPIAIALADESRAKADLAAAEGMRADPDLRELADEEIAAAQARLLELEQELALLLVPRDPRDEGNLFLEVRAGTGGDEAAIFAGDLFRMYARYAERQGWKVEIESDNPGEHGGYKEVVARVVGRGAFSRLKFESGTHRVQRVPATESQGRIHTSAATVAIIPEADEVDDIVINPADLKVDTFRSSGAGGQHVNKTESAIRITHVPTGVVVECQTERSQHANRDKAMKRLKAQLLDAERQRQDAAQAESRRLQVGSGDRSQRIRTYNFPQGRITDHRVEGLTLYDLPNILAGDLDPLLQRLSHEHQVDALAQLSAG.

Gln235 bears the N5-methylglutamine mark. Positions 281–310 are disordered; that stretch reads AERQRQDAAQAESRRLQVGSGDRSQRIRTY.

This sequence belongs to the prokaryotic/mitochondrial release factor family. Post-translationally, methylated by PrmC. Methylation increases the termination efficiency of RF1.

It localises to the cytoplasm. Its function is as follows. Peptide chain release factor 1 directs the termination of translation in response to the peptide chain termination codons UAG and UAA. This chain is Peptide chain release factor 1, found in Stenotrophomonas maltophilia (strain K279a).